We begin with the raw amino-acid sequence, 258 residues long: Snake venom serine protease 2 (258 aa).

The signal sequence occupies residues 1-18 (MVLIRVLANLLILQLSYA). Residues 19-24 (QKSSEL) constitute a propeptide that is removed on maturation. Residues 25–249 (VFGGRPCNIN…YNDWVQSIIA (225 aa)) enclose the Peptidase S1 domain. Intrachain disulfides connect C31/C163, C50/C66, C98/C256, C142/C210, C174/C189, and C200/C225. N44 is a glycosylation site (N-linked (GlcNAc...) asparagine). Residues H65 and D110 each act as charge relay system in the active site. N-linked (GlcNAc...) asparagine glycosylation is found at N122 and N185. The Charge relay system role is filled by S204.

It belongs to the peptidase S1 family. Snake venom subfamily. Monomer. As to expression, expressed by the venom gland.

The protein localises to the secreted. Its activity is regulated as follows. Inhibited by PMSF at 2 mM concentration but not by EDTA. Its function is as follows. Snake venom serine protease that may act in the hemostasis system of the prey. Has weak fibrinogen clotting activity. Possesses amidolysis activity towards S-2251 (substrate for plasmin) but has no hydrolytic activity with S-2302 (plasma kallikrein substrate) or S-2238 (thrombin substrate). The polypeptide is Snake venom serine protease 2 (Protobothrops jerdonii (Jerdon's pitviper)).